The sequence spans 822 residues: Pentatricopeptide repeat-containing protein At2g41720 (822 aa).

Residues 1-28 (MATVTNFKLVTPPESSRADKPGATKASD) form a disordered region. PPR repeat units lie at residues 106 to 136 (ARKNFPVLIRELSRRGCIELCVNVFKWMKIQ), 142 to 176 (RNDIYNMMIRLHARHNWVDQARGLFFEMQKWSCKP), 177 to 211 (DAETYDALINAHGRAGQWRWAMNLMDDMLRAAIAP), 212 to 246 (SRSTYNNLINACGSSGNWREALEVCKKMTDNGVGP), 247 to 281 (DLVTHNIVLSAYKSGRQYSKALSYFELMKGAKVRP), 282 to 316 (DTTTFNIIIYCLSKLGQSSQALDLFNSMREKRAEC), 319 to 353 (DVVTFTSIMHLYSVKGEIENCRAVFEAMVAEGLKP), 354 to 388 (NIVSYNALMGAYAVHGMSGTALSVLGDIKQNGIIP), 389 to 423 (DVVSYTCLLNSYGRSRQPGKAKEVFLMMRKERRKP), 424 to 458 (NVVTYNALIDAYGSNGFLAEAVEIFRQMEQDGIKP), 459 to 493 (NVVSVCTLLAACSRSKKKVNVDTVLSAAQSRGINL), 494 to 528 (NTAAYNSAIGSYINAAELEKAIALYQSMRKKKVKA), 529 to 563 (DSVTFTILISGSCRMSKYPEAISYLKEMEDLSIPL), 564 to 598 (TKEVYSSVLCAYSKQGQVTEAESIFNQMKMAGCEP), 599 to 633 (DVIAYTSMLHAYNASEKWGKACELFLEMEANGIEP), 634 to 668 (DSIACSALMRAFNKGGQPSNVFVLMDLMREKEIPF), 669 to 699 (TGAVFFEIFSACNTLQEWKRAIDLIQMMDPY), 704 to 738 (SIGLTNQMLHLFGKSGKVEAMMKLFYKIIASGVGI), and 739 to 773 (NLKTYAILLEHLLAVGNWRKYIEVLEWMSGAGIQP).

It belongs to the PPR family. P subfamily.

The polypeptide is Pentatricopeptide repeat-containing protein At2g41720 (EMB2654) (Arabidopsis thaliana (Mouse-ear cress)).